A 297-amino-acid polypeptide reads, in one-letter code: Transmembrane protein 169 (297 aa).

The disordered stretch occupies residues 1–88 (MEESAPVESQ…EGEDFLDYPG (88 aa)). The Extracellular segment spans residues 1-159 (MEESAPVESQ…CQVGADQGPH (159 aa)). Over residues 22-31 (RRAVAAVLAL) the composition is skewed to low complexity. 2 stretches are compositionally biased toward acidic residues: residues 61 to 70 (KTDEEPEESE) and 78 to 88 (EEGEDFLDYPG). A helical membrane pass occupies residues 160–180 (VVLWTLVCLPVVFVLSFVVSF). Residues 181 to 210 (YYGTITWYNIFLVYNEERTFWHKISCCPCL) lie on the Cytoplasmic side of the membrane. The chain crosses the membrane as a helical span at residues 211 to 231 (ILFYPVLIMTMASSLGLYAAV). Topologically, residues 232–297 (AQLSWSWAAW…PIQEVETSTV (66 aa)) are extracellular.

The protein resides in the membrane. The polypeptide is Transmembrane protein 169 (Tmem169) (Mus musculus (Mouse)).